A 563-amino-acid chain; its full sequence is Solute carrier family 22 member 1 (563 aa).

Over 1 to 21 the chain is Cytoplasmic; it reads MLTVDDVLEQVGEFGWFQKQT. The helical transmembrane segment at 22–42 threads the bilayer; that stretch reads FLILCLLSAAFAPIYVGIVFL. At 43 to 144 the chain is on the extracellular side; that stretch reads AFTPDHRCRS…LVCDDSWKVD (102 aa). Residue N71 is glycosylated (N-linked (GlcNAc...) asparagine). The helical transmembrane segment at 145–165 threads the bilayer; sequence LFQSCVNLGFFLGSLGVGYIA. At 166–171 the chain is on the cytoplasmic side; it reads DRFGRK. A helical transmembrane segment spans residues 172 to 192; that stretch reads VCLLATTLTCASLGVLTAVAP. Residues 193-196 lie on the Extracellular side of the membrane; that stretch reads DYTS. Residues 197-219 form a helical membrane-spanning segment; the sequence is LLIFRLLQGLVSKGSWTAGYTLI. Residues 220-232 lie on the Cytoplasmic side of the membrane; that stretch reads TEFVGLGYRRTVA. A helical membrane pass occupies residues 233–253; that stretch reads ILYQMAFTVGLVLLSGLAYIL. Residues 254–257 lie on the Extracellular side of the membrane; sequence PHWR. The chain crosses the membrane as a helical span at residues 258 to 278; the sequence is WLQLAVSLPIFLLLFRFWFVP. Positions 278-282 match the Proline-rich sequence motif; sequence PESPR. Residues 279 to 342 lie on the Cytoplasmic side of the membrane; that stretch reads ESPRWLLSQK…FRTPNLRKYT (64 aa). S328 bears the Phosphoserine mark. A helical transmembrane segment spans residues 343–363; sequence FILMYLWFTSSVVYQGLIMHV. The Extracellular portion of the chain corresponds to 364–371; sequence GATGGNLY. The helical transmembrane segment at 372-392 threads the bilayer; that stretch reads LDFLYSALVEFPAGFIILVTI. At 393 to 398 the chain is on the cytoplasmic side; it reads DRFGRR. Residues 399 to 418 form a helical membrane-spanning segment; it reads YPLATSNLAAGLACFLMIFI. Residues 419–423 are Extracellular-facing; sequence PHDLP. Residues 424-446 traverse the membrane as a helical segment; the sequence is WLNIMVACVGRMGITIVFQMVCL. Topologically, residues 447 to 459 are cytoplasmic; that stretch reads VNAELFPTFIRNL. The chain crosses the membrane as a helical span at residues 460 to 480; sequence GMMVCSSLCDLGGVLTPFLVF. Residues 481–487 lie on the Extracellular side of the membrane; that stretch reads RLMEVWQ. Residues 488-508 traverse the membrane as a helical segment; that stretch reads GSPLILFAALGLVAGGMTLLL. Over 509-563 the chain is Cytoplasmic; it reads PETKGVTLPETIEDAENLQRKAKPKENKIYLQVQTSELNTQAAERDASQGTAQQK.

It belongs to the major facilitator (TC 2.A.1) superfamily. Organic cation transporter (TC 2.A.1.19) family. Phosphorylated.

The protein localises to the basolateral cell membrane. It is found in the apical cell membrane. Its subcellular location is the lateral cell membrane. It localises to the basal cell membrane. The protein resides in the cell membrane. The enzyme catalyses 1-methylnicotinamide(out) = 1-methylnicotinamide(in). The catalysed reaction is dopamine(out) = dopamine(in). It catalyses the reaction serotonin(out) = serotonin(in). It carries out the reaction (R)-adrenaline(out) = (R)-adrenaline(in). The enzyme catalyses (R)-noradrenaline(out) = (R)-noradrenaline(in). The catalysed reaction is histamine(out) = histamine(in). It catalyses the reaction guanidine(out) = guanidine(in). It carries out the reaction choline(out) = choline(in). The enzyme catalyses acetylcholine(in) = acetylcholine(out). The catalysed reaction is thiamine(in) = thiamine(out). It catalyses the reaction spermidine(in) = spermidine(out). It carries out the reaction agmatine(out) = agmatine(in). The enzyme catalyses putrescine(out) = putrescine(in). The catalysed reaction is (R)-carnitine(in) = (R)-carnitine(out). It catalyses the reaction O-isobutanoyl-(R)-carnitine(in) = O-isobutanoyl-(R)-carnitine(out). It carries out the reaction O-acetyl-(R)-carnitine(in) = O-acetyl-(R)-carnitine(out). The enzyme catalyses O-3-hydroxybutanoyl-(R)-carnitine(in) = O-3-hydroxybutanoyl-(R)-carnitine(out). The catalysed reaction is O-propanoyl-(R)-carnitine(in) = O-propanoyl-(R)-carnitine(out). It catalyses the reaction O-butanoyl-(R)-carnitine(in) = O-butanoyl-(R)-carnitine(out). It carries out the reaction O-2-methylbutanoyl-(R)-carnitine(in) = O-2-methylbutanoyl-(R)-carnitine(out). The enzyme catalyses O-3-methylbutanoyl-(R)-carnitine(in) = O-3-methylbutanoyl-(R)-carnitine(out). The catalysed reaction is O-hexanoyl-(R)-carnitine(in) = O-hexanoyl-(R)-carnitine(out). It catalyses the reaction L-histidyl-L-proline diketopiperazine(in) = L-histidyl-L-proline diketopiperazine(out). It carries out the reaction (R)-salsolinol(in) = (R)-salsolinol(out). The enzyme catalyses prostaglandin F2alpha(out) = prostaglandin F2alpha(in). The catalysed reaction is prostaglandin E2(out) = prostaglandin E2(in). Phosphorylation of the transporter leads to changes in its substrate affinity, resulting in a regulation of the transport activity. In contrast with rat ortholog, ASP uptake is inhibited by protein kinase A (PKA) and C (PKC) activation. ASP uptake is also endogenously activated by calmodulin, the calmodulin-dependent kinase II and LCK tyrosine kinase. Inhibited by cGMP, most likely through a cGMP-binding protein that interacts with OCT1. Its function is as follows. Electrogenic voltage-dependent transporter that mediates the transport of a variety of organic cations such as endogenous bioactive amines, cationic drugs and xenobiotics. Functions as a pH- and Na(+)-independent, bidirectional transporter. Cation cellular uptake or release is driven by the electrochemical potential (i.e. membrane potential and concentration gradient) and substrate selectivity. Hydrophobicity is a major requirement for recognition in polyvalent substrates and inhibitors. Primarily expressed in the basolateral membrane of hepatocytes and proximal tubules and involved in the uptake and disposition of cationic compounds from the blood by hepatic and renal clearance. Most likely functions as an uptake carrier in enterocytes contributing to the intestinal elimination of organic cations from the systemic circulation. Transports endogenous monoamines such as N-1-methylnicotinamide (NMN), guanidine, neurotransmitters dopamine, serotonin, noradrenaline, adrenaline and histamine, and quaternary ammonium compound such as choline. Also transports natural polyamines such as spermidine, agmatine and putrescine at low affinity, but relatively high turnover. Involved in the hepatic and intestinal uptake of the vitamin B1/thiamine, hence regulating hepatic lipid and energy metabolism. Contributes to the influx and efflux of fatty acid carriers carnitines and acylcarnitines across the basolateral membrane of hepatocytes, from the liver to the systemic circulation and inversely and may be involved in regulating the systemic availability of hepatic acylcarnitines. Also capable of transporting non-amine endogenous compounds such as prostaglandin E2 (PGE2) and prostaglandin F2-alpha (PGF2-alpha). May contribute to the transport of cationic compounds in testes across the blood-testis-barrier. Also mediates the uptake of xenobiotics tributylmethylammonium (TBuMA), quinidine, N-methyl-quinine (NMQ), N-methyl-quinidine (NMQD) N-(4,4-azo-n-pentyl)-quinuclidine (APQ), azidoprocainamide methoiodide (AMP), N-(4,4-azo-n-pentyl)-21-deoxyajmalinium (APDA) and 4-(4-(dimethylamino)styryl)-N-methylpyridinium (ASP). This Bos taurus (Bovine) protein is Solute carrier family 22 member 1 (SLC22A1).